Consider the following 335-residue polypeptide: Glucan endo-1,3-beta-glucosidase, acidic isoform (335 aa).

The first 29 residues, 1-29 (MARQGVIASMHALALLLGAFAAIPTGVQS), serve as a signal peptide directing secretion. The Proton donor role is filled by glutamate 122. Catalysis depends on glutamate 259, which acts as the Nucleophile.

This sequence belongs to the glycosyl hydrolase 17 family. In terms of tissue distribution, accumulates in aleurone layers. Much lower levels are found in the embryo, and none in starchy endosperm.

It is found in the secreted. Its subcellular location is the extracellular space. It carries out the reaction Hydrolysis of (1-&gt;3)-beta-D-glucosidic linkages in (1-&gt;3)-beta-D-glucans.. Functionally, is thought to be an important plant defense-related product against fungal pathogens. The protein is Glucan endo-1,3-beta-glucosidase, acidic isoform of Zea mays (Maize).